We begin with the raw amino-acid sequence, 890 residues long: V-type proton ATPase subunit a, Golgi isoform (890 aa).

An N-acetylmethionine modification is found at Met1. At 1–450 the chain is on the cytoplasmic side; sequence MNQEEAIFRS…DAYGIATYKE (450 aa). Residues 113-154 adopt a coiled-coil conformation; that stretch reads LENVNDMVKEITDCESRARQLDESLDSLRSKLNDLLEQRQVI. Ser223 and Ser228 each carry phosphoserine. Residues 297–347 adopt a coiled-coil conformation; sequence LKKVKRVIDSLNGKIVSLNTRSSELVDTLNRQIDDLQRILDTTEQTLHTEL. Residues 451–469 traverse the membrane as a helical segment; sequence INAGLATVVTFPFMFAIMF. The Vacuolar segment spans residues 470 to 471; sequence GD. Residues 472 to 488 form a helical membrane-spanning segment; it reads MGHGFILFLMALFLVLN. At 489–502 the chain is on the cytoplasmic side; it reads ERKFGAMHRDEIFD. A helical transmembrane segment spans residues 503-532; that stretch reads MAFTGRYVLLLMGAFSVYTGLLYNDIFSKS. Residues 533–580 lie on the Vacuolar side of the membrane; the sequence is MTIFKSGWQWPSTFRKGESIEAKKTGVYPFGLDFAWHGTDNGLLFSNS. The helical transmembrane segment at 581–600 threads the bilayer; the sequence is YKMKLSILMGYAHMTYSFMF. Topologically, residues 601–618 are cytoplasmic; it reads SYINYRAKNSKVDIIGNF. Residues 619 to 639 traverse the membrane as a helical segment; it reads IPGLVFMQSIFGYLSWAIVYK. Topologically, residues 640-682 are vacuolar; that stretch reads WSKDWIKDDKPAPGLLNMLINMFLAPGTIDDQLYSGQAKLQVV. A helical membrane pass occupies residues 683-702; that stretch reads LLLAALVCVPWLLLYKPLTL. Residues 703–779 are Cytoplasmic-facing; the sequence is RRLNKNGGGG…DVMIHQVIHT (77 aa). A helical membrane pass occupies residues 780–804; that stretch reads IEFCLNCISHTASYLRLWALSLAHA. Topologically, residues 805–828 are vacuolar; sequence QLSSVLWDMTISNAFSSKNSGSPL. Residues 829 to 867 traverse the membrane as a helical segment; it reads AVMKVVFLFAMWFVLTVCILVFMEGTSAMLHALRLHWVE. The Cytoplasmic segment spans residues 868–890; sequence AMSKFFEGEGYAYEPFSFRAIIE.

This sequence belongs to the V-ATPase 116 kDa subunit family. As to quaternary structure, V-ATPase is a heteromultimeric enzyme composed of a peripheral catalytic V1 complex (components A to H) attached to an integral membrane V0 proton pore complex (components: a, c, c', c'', d, e, f and VOA1). Post-translationally, glycosylated.

Its subcellular location is the endosome membrane. It is found in the golgi apparatus membrane. Functionally, subunit of the V0 complex of vacuolar(H+)-ATPase (V-ATPase), a multisubunit enzyme composed of a peripheral complex (V1) that hydrolyzes ATP and a membrane integral complex (V0) that translocates protons. V-ATPase is responsible for acidifying and maintaining the pH of intracellular compartments. Is present only in Golgi- and endosome-residing V-ATPase complexes; enzymes containing this subunit have a 4-fold lower ratio of proton transport to ATP hydrolysis than complexes containing the vacuolar isoform and do not dissociate V1 and V0 in response to glucose depletion. This chain is V-type proton ATPase subunit a, Golgi isoform (STV1), found in Saccharomyces cerevisiae (strain ATCC 204508 / S288c) (Baker's yeast).